The sequence spans 725 residues: MFKVFGFGAKEEIPELSQEEKTKAILKQAHDFEQALRAMDYVLDDNADEGLALLDESDAKEASDQTINALARGVIEFLEATLGFEAEEMKKASATLAKAEALSLKSRERAQKIGLKSSSLYPPGTVYAVTYTESCLLHALLMIFSESMMEAAKAILKLRKSYYMLQEILETIKAANKAKKLKITSGSEDKESTPATFITGGDAFNSVDIPYELTPEEQKDKDLLQFAEQIHSMRTERLSGAHIGNSPAINRLRGELGLQAMEDLPEEEITDHKVLSDDIDLSQATIDEFVHSGVNLCFGILQVVISLLPPAIGAVLSVVGFRGSREEGLRLVWKATKQRNVHGCIGLLALMFYYDGPFQFTDDDFDIPAAVKDSSNSEDSEDEEMDGPTLLHPGKILEDALLQSRALFPNSALWLLNEARMLSGKGRLEEAVALMDSIDVSKIRMRQVKSLMIFDRAITLIHLHQYDRAAEDILSLLDISDWSHAFYTYFAGCCYLENWRMCEMGLMKSDKKDEYQKKAEELIFTSVNLLGKKTFKSKNLPLDRFILRKVEQFKAKKEELGVENPLDGIATSPVHEIAYFYNGYNRMSEEHLELTKKMLTEYRNPAIEALDSDQELIKDLLVSLTLRRLGHIQEGCDILDEKVLPKFFSIQNGKVKYIKKTEDPWAYPTALYERALFTWKLEGMDGLPESKEWLLRAQGYADDYELSTRVGMKIKAAIDRVDHSL.

T196 is subject to Phosphothreonine. Phosphoserine occurs at positions 246, 377, and 380.

It belongs to the IML2 family.

The protein resides in the cytoplasm. It localises to the nucleus. The protein is IML2-like protein YKR018C of Saccharomyces cerevisiae (strain ATCC 204508 / S288c) (Baker's yeast).